Here is a 97-residue protein sequence, read N- to C-terminus: Co-chaperonin GroES (97 aa).

It belongs to the GroES chaperonin family. In terms of assembly, heptamer of 7 subunits arranged in a ring. Interacts with the chaperonin GroEL.

The protein localises to the cytoplasm. Its function is as follows. Together with the chaperonin GroEL, plays an essential role in assisting protein folding. The GroEL-GroES system forms a nano-cage that allows encapsulation of the non-native substrate proteins and provides a physical environment optimized to promote and accelerate protein folding. GroES binds to the apical surface of the GroEL ring, thereby capping the opening of the GroEL channel. This Klebsiella aerogenes (Enterobacter aerogenes) protein is Co-chaperonin GroES.